The following is a 79-amino-acid chain: Small ribosomal subunit protein bS18 (79 aa).

It belongs to the bacterial ribosomal protein bS18 family. Part of the 30S ribosomal subunit. Forms a tight heterodimer with protein bS6.

Its function is as follows. Binds as a heterodimer with protein bS6 to the central domain of the 16S rRNA, where it helps stabilize the platform of the 30S subunit. In Onion yellows phytoplasma (strain OY-M), this protein is Small ribosomal subunit protein bS18.